A 377-amino-acid chain; its full sequence is Unsaturated glucuronyl hydrolase (377 aa).

The Nucleophile role is filled by D88. The Proton donor role is filled by D149.

This sequence belongs to the glycosyl hydrolase 88 family. In terms of assembly, monomer.

Its subcellular location is the cytoplasm. It catalyses the reaction beta-D-Delta(4)-GlcA-(1-&gt;4)-beta-D-Glc-(1-&gt;4)-alpha-L-Rha-(1-&gt;3)-D-Glc + H2O = beta-D-Glc-(1-&gt;4)-alpha-L-Rha-(1-&gt;3)-D-Glc + 5-dehydro-4-deoxy-D-glucuronate. With respect to regulation, partially inhibited by divalent metal ions such as calcium, copper, iron and mercury. Functionally, catalyzes the hydrolysis of oligosaccharides with unsaturated glucuronyl residues at the non-reducing terminal, to a sugar or an amino sugar, and an unsaturated D-glucuronic acid (GlcA), which is nonenzymatically converted immediately to alpha-keto acid. This is Unsaturated glucuronyl hydrolase (ugl) from Bacillus sp. (strain GL1).